The following is a 515-amino-acid chain: 2-isopropylmalate synthase (515 aa).

Positions 4-266 (IKIFDTTLRD…ETGLILKETK (263 aa)) constitute a Pyruvate carboxyltransferase domain. Positions 13, 201, 203, and 237 each coordinate Mn(2+). A regulatory domain region spans residues 392 to 515 (KLIQFGVSYD…ANLTRLVYES (124 aa)).

The protein belongs to the alpha-IPM synthase/homocitrate synthase family. LeuA type 1 subfamily. In terms of assembly, homodimer. Requires Mn(2+) as cofactor.

The protein resides in the cytoplasm. It carries out the reaction 3-methyl-2-oxobutanoate + acetyl-CoA + H2O = (2S)-2-isopropylmalate + CoA + H(+). It functions in the pathway amino-acid biosynthesis; L-leucine biosynthesis; L-leucine from 3-methyl-2-oxobutanoate: step 1/4. Catalyzes the condensation of the acetyl group of acetyl-CoA with 3-methyl-2-oxobutanoate (2-ketoisovalerate) to form 3-carboxy-3-hydroxy-4-methylpentanoate (2-isopropylmalate). This is 2-isopropylmalate synthase from Oceanobacillus iheyensis (strain DSM 14371 / CIP 107618 / JCM 11309 / KCTC 3954 / HTE831).